The chain runs to 525 residues: Acyl-lipid (9-3)-desaturase (525 aa).

The Cytochrome b5 heme-binding domain occupies 102-176 (KSTHPLSEVA…LQDFYIGDVE (75 aa)). Heme contacts are provided by His137 and His159. A helical transmembrane segment spans residues 216–236 (VAIFAASIAIICWSKTISAVL). The Histidine box-1 signature appears at 254-258 (HDFLH). Residues 266-286 (WLNEVVGYVIGNAVLGFSTGW) traverse the membrane as a helical segment. The short motif at 291–295 (HNLHH) is the Histidine box-2 element. A run of 3 helical transmembrane segments spans residues 340 to 360 (QHLF…FWSW), 378 to 398 (GTVL…LPGW), and 401 to 421 (LVWM…VFVL). The Histidine box-3 signature appears at 462–466 (QIEHH).

Belongs to the fatty acid desaturase type 1 family.

Its subcellular location is the membrane. It carries out the reaction (9Z,12Z,15Z)-octadecatrienoyl-containing glycerolipid + 2 Fe(II)-[cytochrome b5] + O2 + 2 H(+) = (6Z,9Z,12Z,15Z)-octadecatetraenoyl-containing glycerolipid + 2 Fe(III)-[cytochrome b5] + 2 H2O. The enzyme catalyses a (9Z,12Z)-octadecadienoyl-containing glycerolipid + 2 Fe(II)-[cytochrome b5] + O2 + 2 H(+) = (6Z,9Z,12Z)-octadecatrienoyl-containing glycerolipid + 2 Fe(III)-[cytochrome b5] + 2 H2O. It functions in the pathway lipid metabolism; polyunsaturated fatty acid biosynthesis. In terms of biological role, fatty acid desaturase able to introduce a delta(6)-double bond into delta(9)-unsaturated fatty-acid substrates. Can use both linoleic acid (18:2(9Z,12Z)) and alpha-linolenic acid (18:3(9Z,12Z,15Z)) as substrates. Required for the biosynthesis of arachidonic acid (20:4(5z,8Z,11Z,14Z)). This Physcomitrium patens (Spreading-leaved earth moss) protein is Acyl-lipid (9-3)-desaturase.